The primary structure comprises 94 residues: Large ribosomal subunit protein bL27 (94 aa).

A propeptide spanning residues 1–9 (MLKLNLQFF) is cleaved from the precursor. Residues 12 to 32 (KKGVSSTKNGRDSESKRLGAK) are disordered. Positions 20 to 32 (NGRDSESKRLGAK) are enriched in basic and acidic residues.

The protein belongs to the bacterial ribosomal protein bL27 family. The N-terminus is cleaved by ribosomal processing cysteine protease Prp.

In Staphylococcus carnosus (strain TM300), this protein is Large ribosomal subunit protein bL27.